We begin with the raw amino-acid sequence, 1045 residues long: 3-hydroxy-3-methylglutaryl-coenzyme A reductase 2 (1045 aa).

Topologically, residues 1–24 are cytoplasmic; the sequence is MSLPLKTIVHLVKPFACTARFSAR. Residues 25 to 45 form a helical membrane-spanning segment; that stretch reads YPIHVIVVAVLLSAAAYLSVT. Residues 46–186 lie on the Lumenal side of the membrane; the sequence is QSYLNEWKLD…FSNKTSEFDQ (141 aa). N-linked (GlcNAc...) asparagine glycans are attached at residues asparagine 115, asparagine 150, asparagine 158, and asparagine 179. A helical transmembrane segment spans residues 187 to 207; the sequence is FDLFIILAAYLTLFYTLCCLF. The SSD domain maps to 188–356; sequence DLFIILAAYL…ATFYSAILSM (169 aa). At 208–216 the chain is on the cytoplasmic side; it reads NDMRKIGSK. Residues 217–237 form a helical membrane-spanning segment; the sequence is FWLSFSALSNSACALYLSLYT. At 238 to 243 the chain is on the lumenal side; the sequence is THSLLK. Residues 244–264 traverse the membrane as a helical segment; sequence KPASLLSLVIGLPFIVVIIGF. Residues 265-301 are Cytoplasmic-facing; it reads KHKVRLAAFSLQKFHRISIDKKITVSNIIYEAMFQEG. The chain crosses the membrane as a helical span at residues 302 to 322; it reads AYLIRDYLFYISSFIGCAIYA. The Lumenal portion of the chain corresponds to 323 to 324; it reads RH. A helical transmembrane segment spans residues 325-345; the sequence is LPGLVNFCILSTFMLVFDLLL. At 346 to 402 the chain is on the cytoplasmic side; sequence SATFYSAILSMKLEINIIHRSTVIRQTLEEDGVVPTTADIIYKDETASEPHFLRSNV. A helical membrane pass occupies residues 403-423; that stretch reads AIILGKASVIGLLLLINLYVF. Over 424–497 the chain is Lumenal; the sequence is TDKLNATILN…DSVSNAIRDQ (74 aa). N-linked (GlcNAc...) asparagine glycans are attached at residues asparagine 428 and asparagine 455. The chain crosses the membrane as a helical span at residues 498-518; that stretch reads FISKLLFFAFAVSISINVYLL. Over 519–1045 the chain is Cytoplasmic; it reads NAAKIHTGYM…GPPCKTSALL (527 aa). Threonine 565 carries the post-translational modification Phosphothreonine. The Charge relay system role is filled by glutamate 710. 716-722 contacts CoA; it reads SAMRGCK. NADP(+) contacts are provided by residues 777-779 and 804-812; these read SRF and DAMGMNMIS. Catalysis depends on lysine 844, which acts as the Charge relay system. 873-875 provides a ligand contact to CoA; the sequence is VLK. Aspartate 920 (charge relay system) is an active-site residue. A CoA-binding site is contributed by 1015–1016; the sequence is SH. The Proton donor role is filled by histidine 1016. Residues 1018–1045 are disordered; that stretch reads THNRKTNKANELPQPSNKGPPCKTSALL. Residue 1020 to 1021 participates in NADP(+) binding; sequence NR.

This sequence belongs to the HMG-CoA reductase family.

It is found in the endoplasmic reticulum membrane. Its subcellular location is the nucleus envelope. The enzyme catalyses (R)-mevalonate + 2 NADP(+) + CoA = (3S)-3-hydroxy-3-methylglutaryl-CoA + 2 NADPH + 2 H(+). The protein operates within metabolic intermediate biosynthesis; (R)-mevalonate biosynthesis; (R)-mevalonate from acetyl-CoA: step 3/3. Functionally, HMG-CoA reductase; part of the first module of ergosterol biosynthesis pathway constitutes by the early steps of the pathway, conserved across all eukaryotes, and which results in the formation of mevalonate from acetyl-coenzyme A (acetyl-CoA). HMG1 and HMG2 catalyze the reduction of hydroxymethylglutaryl-CoA (HMG-CoA) to mevalonate that is the rate-limiting step within the first mosule. The first module starts with the action of the cytosolic acetyl-CoA acetyltransferase ERG10 that catalyzes the formation of acetoacetyl-CoA. The hydroxymethylglutaryl-CoA synthase ERG13 then condenses acetyl-CoA with acetoacetyl-CoA to form HMG-CoA. The rate-limiting step of the early module is the reduction to mevalonate by the 3-hydroxy-3-methylglutaryl-coenzyme A (HMG-CoA) reductases HMG1 and HMG2 which are derived from a single ancestral HMGR gene by gene duplication. This Saccharomyces cerevisiae (strain ATCC 204508 / S288c) (Baker's yeast) protein is 3-hydroxy-3-methylglutaryl-coenzyme A reductase 2.